A 192-amino-acid polypeptide reads, in one-letter code: Peptidyl-tRNA hydrolase (192 aa).

Tyr17 serves as a coordination point for tRNA. The Proton acceptor role is filled by His22. Phe68, Asn70, and Asn116 together coordinate tRNA.

The protein belongs to the PTH family. Monomer.

Its subcellular location is the cytoplasm. It carries out the reaction an N-acyl-L-alpha-aminoacyl-tRNA + H2O = an N-acyl-L-amino acid + a tRNA + H(+). Its function is as follows. Hydrolyzes ribosome-free peptidyl-tRNAs (with 1 or more amino acids incorporated), which drop off the ribosome during protein synthesis, or as a result of ribosome stalling. Catalyzes the release of premature peptidyl moieties from peptidyl-tRNA molecules trapped in stalled 50S ribosomal subunits, and thus maintains levels of free tRNAs and 50S ribosomes. This is Peptidyl-tRNA hydrolase from Xylella fastidiosa (strain Temecula1 / ATCC 700964).